Reading from the N-terminus, the 201-residue chain is MAAPVRRSVVFVTGNAKKLEEVTQILGDSSPYTLVARKIDLPEYQGEPDEISVQKCREAARQIRGPVIVEDTCLCFNALGGLPGPYIKWFLEKLKPEGLYKLLAGFEDKSAYALCTFAFSTGNPEEPVKLFKGQTHGVIVEPRGPRDFGWDPCFQPDGYDQTYAELPKAVKNSISHRYRALSELSAFFLQSNPTEAPSSPS.

13–18 (TGNAKK) contacts ITP. Mg(2+) is bound at residue E43. ITP contacts are provided by residues K55, 71–72 (DT), K88, 148–151 (FGWD), K171, and 176–177 (HR).

The protein belongs to the HAM1 NTPase family. In terms of assembly, homodimer. The cofactor is Mg(2+). Requires Mn(2+) as cofactor.

It is found in the cytoplasm. It catalyses the reaction ITP + H2O = IMP + diphosphate + H(+). The enzyme catalyses dITP + H2O = dIMP + diphosphate + H(+). The catalysed reaction is XTP + H2O = XMP + diphosphate + H(+). It carries out the reaction N(6)-hydroxy-dATP + H2O = N(6)-hydroxy-dAMP + diphosphate + H(+). In terms of biological role, pyrophosphatase that hydrolyzes the non-canonical purine nucleotides inosine triphosphate (ITP), deoxyinosine triphosphate (dITP) as well as 2'-deoxy-N-6-hydroxylaminopurine triphosphate (dHAPTP) and xanthosine 5'-triphosphate (XTP) to their respective monophosphate derivatives. The enzyme does not distinguish between the deoxy- and ribose forms. Probably excludes non-canonical purines from RNA and DNA precursor pools, thus preventing their incorporation into RNA and DNA and avoiding chromosomal lesions. In Gallus gallus (Chicken), this protein is Inosine triphosphate pyrophosphatase.